A 101-amino-acid polypeptide reads, in one-letter code: Urease subunit beta (101 aa).

Belongs to the urease beta subunit family. Heterotrimer of UreA (gamma), UreB (beta) and UreC (alpha) subunits. Three heterotrimers associate to form the active enzyme.

The protein resides in the cytoplasm. It catalyses the reaction urea + 2 H2O + H(+) = hydrogencarbonate + 2 NH4(+). The protein operates within nitrogen metabolism; urea degradation; CO(2) and NH(3) from urea (urease route): step 1/1. This is Urease subunit beta from Hahella chejuensis (strain KCTC 2396).